The sequence spans 154 residues: 6,7-dimethyl-8-ribityllumazine synthase (154 aa).

5-amino-6-(D-ribitylamino)uracil-binding positions include phenylalanine 22, 56 to 58 (AFE), and 80 to 82 (AVI). 85-86 (AT) serves as a coordination point for (2S)-2-hydroxy-3-oxobutyl phosphate. Histidine 88 acts as the Proton donor in catalysis. Phenylalanine 113 serves as a coordination point for 5-amino-6-(D-ribitylamino)uracil. Arginine 127 contributes to the (2S)-2-hydroxy-3-oxobutyl phosphate binding site.

This sequence belongs to the DMRL synthase family. As to quaternary structure, forms an icosahedral capsid composed of 60 subunits, arranged as a dodecamer of pentamers.

It carries out the reaction (2S)-2-hydroxy-3-oxobutyl phosphate + 5-amino-6-(D-ribitylamino)uracil = 6,7-dimethyl-8-(1-D-ribityl)lumazine + phosphate + 2 H2O + H(+). Its pathway is cofactor biosynthesis; riboflavin biosynthesis; riboflavin from 2-hydroxy-3-oxobutyl phosphate and 5-amino-6-(D-ribitylamino)uracil: step 1/2. Catalyzes the formation of 6,7-dimethyl-8-ribityllumazine by condensation of 5-amino-6-(D-ribitylamino)uracil with 3,4-dihydroxy-2-butanone 4-phosphate. This is the penultimate step in the biosynthesis of riboflavin. The protein is 6,7-dimethyl-8-ribityllumazine synthase of Geobacillus sp. (strain WCH70).